Reading from the N-terminus, the 399-residue chain is UDP-N-acetylglucosamine--N-acetylmuramyl-(pentapeptide) pyrophosphoryl-undecaprenol N-acetylglucosamine transferase (399 aa).

UDP-N-acetyl-alpha-D-glucosamine contacts are provided by residues 29–31 (TAG), asparagine 148, arginine 185, serine 219, and glutamine 318.

The protein belongs to the glycosyltransferase 28 family. MurG subfamily.

It localises to the cell membrane. It catalyses the reaction di-trans,octa-cis-undecaprenyl diphospho-N-acetyl-alpha-D-muramoyl-L-alanyl-D-glutamyl-meso-2,6-diaminopimeloyl-D-alanyl-D-alanine + UDP-N-acetyl-alpha-D-glucosamine = di-trans,octa-cis-undecaprenyl diphospho-[N-acetyl-alpha-D-glucosaminyl-(1-&gt;4)]-N-acetyl-alpha-D-muramoyl-L-alanyl-D-glutamyl-meso-2,6-diaminopimeloyl-D-alanyl-D-alanine + UDP + H(+). The protein operates within cell wall biogenesis; peptidoglycan biosynthesis. Its function is as follows. Cell wall formation. Catalyzes the transfer of a GlcNAc subunit on undecaprenyl-pyrophosphoryl-MurNAc-pentapeptide (lipid intermediate I) to form undecaprenyl-pyrophosphoryl-MurNAc-(pentapeptide)GlcNAc (lipid intermediate II). This is UDP-N-acetylglucosamine--N-acetylmuramyl-(pentapeptide) pyrophosphoryl-undecaprenol N-acetylglucosamine transferase from Mycobacterium ulcerans (strain Agy99).